A 423-amino-acid polypeptide reads, in one-letter code: Imidazolonepropionase (423 aa).

Residues histidine 78 and histidine 80 each coordinate Fe(3+). 2 residues coordinate Zn(2+): histidine 78 and histidine 80. The 4-imidazolone-5-propanoate site is built by arginine 87, tyrosine 150, and histidine 183. An N-formimidoyl-L-glutamate-binding site is contributed by tyrosine 150. Histidine 247 lines the Fe(3+) pocket. Histidine 247 is a binding site for Zn(2+). Glutamate 250 contributes to the 4-imidazolone-5-propanoate binding site. Residue aspartate 322 participates in Fe(3+) binding. Aspartate 322 provides a ligand contact to Zn(2+). The N-formimidoyl-L-glutamate site is built by asparagine 324 and glycine 326. Serine 327 contributes to the 4-imidazolone-5-propanoate binding site.

This sequence belongs to the metallo-dependent hydrolases superfamily. HutI family. Zn(2+) is required as a cofactor. It depends on Fe(3+) as a cofactor.

The protein localises to the cytoplasm. The enzyme catalyses 4-imidazolone-5-propanoate + H2O = N-formimidoyl-L-glutamate. It participates in amino-acid degradation; L-histidine degradation into L-glutamate; N-formimidoyl-L-glutamate from L-histidine: step 3/3. Catalyzes the hydrolytic cleavage of the carbon-nitrogen bond in imidazolone-5-propanoate to yield N-formimidoyl-L-glutamate. It is the third step in the universal histidine degradation pathway. The protein is Imidazolonepropionase of Bacillus mycoides (strain KBAB4) (Bacillus weihenstephanensis).